A 266-amino-acid polypeptide reads, in one-letter code: DNA-directed RNA polymerase subunit Rpo3 (266 aa).

Residues cysteine 205, cysteine 208, and cysteine 211 each coordinate [3Fe-4S] cluster.

The protein belongs to the archaeal Rpo3/eukaryotic RPB3 RNA polymerase subunit family. In terms of assembly, part of the RNA polymerase complex. Requires [3Fe-4S] cluster as cofactor.

The protein localises to the cytoplasm. It carries out the reaction RNA(n) + a ribonucleoside 5'-triphosphate = RNA(n+1) + diphosphate. In terms of biological role, DNA-dependent RNA polymerase (RNAP) catalyzes the transcription of DNA into RNA using the four ribonucleoside triphosphates as substrates. The chain is DNA-directed RNA polymerase subunit Rpo3 from Methanosarcina acetivorans (strain ATCC 35395 / DSM 2834 / JCM 12185 / C2A).